The primary structure comprises 140 residues: Nucleoside diphosphate kinase (140 aa).

ATP is bound by residues lysine 11, phenylalanine 59, arginine 87, threonine 93, arginine 104, and asparagine 114. Histidine 117 functions as the Pros-phosphohistidine intermediate in the catalytic mechanism.

It belongs to the NDK family. In terms of assembly, homotetramer. Mg(2+) serves as cofactor.

The protein localises to the cytoplasm. The catalysed reaction is a 2'-deoxyribonucleoside 5'-diphosphate + ATP = a 2'-deoxyribonucleoside 5'-triphosphate + ADP. It carries out the reaction a ribonucleoside 5'-diphosphate + ATP = a ribonucleoside 5'-triphosphate + ADP. Its function is as follows. Major role in the synthesis of nucleoside triphosphates other than ATP. The ATP gamma phosphate is transferred to the NDP beta phosphate via a ping-pong mechanism, using a phosphorylated active-site intermediate. The chain is Nucleoside diphosphate kinase from Ruegeria sp. (strain TM1040) (Silicibacter sp.).